The sequence spans 222 residues: Cell division protein FtsQ (222 aa).

The Cytoplasmic segment spans residues 1–5 (MNKKV). A helical transmembrane segment spans residues 6 to 26 (IAIVVGVVVVLVAILGVVAWF). At 27-222 (VPILKVGNIE…ISSPSMVTVR (196 aa)) the chain is on the extracellular side. The POTRA domain maps to 30–98 (LKVGNIEVTG…STITVELTER (69 aa)).

This sequence belongs to the FtsQ/DivIB family. FtsQ subfamily.

The protein resides in the cell membrane. Its function is as follows. Essential cell division protein. This is Cell division protein FtsQ from Corynebacterium glutamicum (strain ATCC 13032 / DSM 20300 / JCM 1318 / BCRC 11384 / CCUG 27702 / LMG 3730 / NBRC 12168 / NCIMB 10025 / NRRL B-2784 / 534).